The sequence spans 640 residues: 1-deoxy-D-xylulose-5-phosphate synthase (640 aa).

Thiamine diphosphate-binding positions include H79 and 120–122 (AHS). A Mg(2+)-binding site is contributed by D151. Residues 152 to 153 (GA), N180, Y289, and E371 contribute to the thiamine diphosphate site. N180 contributes to the Mg(2+) binding site.

The protein belongs to the transketolase family. DXPS subfamily. As to quaternary structure, homodimer. Mg(2+) is required as a cofactor. Requires thiamine diphosphate as cofactor.

The catalysed reaction is D-glyceraldehyde 3-phosphate + pyruvate + H(+) = 1-deoxy-D-xylulose 5-phosphate + CO2. Its pathway is metabolic intermediate biosynthesis; 1-deoxy-D-xylulose 5-phosphate biosynthesis; 1-deoxy-D-xylulose 5-phosphate from D-glyceraldehyde 3-phosphate and pyruvate: step 1/1. Catalyzes the acyloin condensation reaction between C atoms 2 and 3 of pyruvate and glyceraldehyde 3-phosphate to yield 1-deoxy-D-xylulose-5-phosphate (DXP). In Novosphingobium aromaticivorans (strain ATCC 700278 / DSM 12444 / CCUG 56034 / CIP 105152 / NBRC 16084 / F199), this protein is 1-deoxy-D-xylulose-5-phosphate synthase.